Here is a 313-residue protein sequence, read N- to C-terminus: Porphobilinogen deaminase (313 aa).

C242 carries the S-(dipyrrolylmethanemethyl)cysteine modification.

This sequence belongs to the HMBS family. As to quaternary structure, monomer. Dipyrromethane serves as cofactor.

The enzyme catalyses 4 porphobilinogen + H2O = hydroxymethylbilane + 4 NH4(+). It participates in porphyrin-containing compound metabolism; protoporphyrin-IX biosynthesis; coproporphyrinogen-III from 5-aminolevulinate: step 2/4. Tetrapolymerization of the monopyrrole PBG into the hydroxymethylbilane pre-uroporphyrinogen in several discrete steps. This Pseudomonas putida (strain ATCC 47054 / DSM 6125 / CFBP 8728 / NCIMB 11950 / KT2440) protein is Porphobilinogen deaminase.